Reading from the N-terminus, the 1085-residue chain is Translation factor GUF1 homolog, mitochondrial (1085 aa).

One can recognise a tr-type G domain in the interval 232–409 (KYIRNFCILA…RIISDIPPPI (178 aa)). Residues 241–248 (AHIDSGKS), 302–306 (DTPGH), and 356–359 (NKID) each bind GTP.

It belongs to the TRAFAC class translation factor GTPase superfamily. Classic translation factor GTPase family. LepA subfamily.

The protein resides in the mitochondrion inner membrane. It catalyses the reaction GTP + H2O = GDP + phosphate + H(+). In terms of biological role, promotes mitochondrial protein synthesis. May act as a fidelity factor of the translation reaction, by catalyzing a one-codon backward translocation of tRNAs on improperly translocated ribosomes. Binds to mitochondrial ribosomes in a GTP-dependent manner. This Plasmodium falciparum (isolate 3D7) protein is Translation factor GUF1 homolog, mitochondrial.